Here is a 219-residue protein sequence, read N- to C-terminus: Thiamine-phosphate synthase (219 aa).

Residues Gln-44–Lys-48 and Asn-79 each bind 4-amino-2-methyl-5-(diphosphooxymethyl)pyrimidine. 2 residues coordinate Mg(2+): Asp-80 and Asp-99. Residue Ser-117 coordinates 4-amino-2-methyl-5-(diphosphooxymethyl)pyrimidine. Thr-143 to Thr-145 is a binding site for 2-[(2R,5Z)-2-carboxy-4-methylthiazol-5(2H)-ylidene]ethyl phosphate. Lys-146 contacts 4-amino-2-methyl-5-(diphosphooxymethyl)pyrimidine. 2-[(2R,5Z)-2-carboxy-4-methylthiazol-5(2H)-ylidene]ethyl phosphate is bound by residues Gly-175 and Ile-195 to Ser-196.

Belongs to the thiamine-phosphate synthase family. Mg(2+) is required as a cofactor.

The enzyme catalyses 2-[(2R,5Z)-2-carboxy-4-methylthiazol-5(2H)-ylidene]ethyl phosphate + 4-amino-2-methyl-5-(diphosphooxymethyl)pyrimidine + 2 H(+) = thiamine phosphate + CO2 + diphosphate. It catalyses the reaction 2-(2-carboxy-4-methylthiazol-5-yl)ethyl phosphate + 4-amino-2-methyl-5-(diphosphooxymethyl)pyrimidine + 2 H(+) = thiamine phosphate + CO2 + diphosphate. It carries out the reaction 4-methyl-5-(2-phosphooxyethyl)-thiazole + 4-amino-2-methyl-5-(diphosphooxymethyl)pyrimidine + H(+) = thiamine phosphate + diphosphate. It functions in the pathway cofactor biosynthesis; thiamine diphosphate biosynthesis; thiamine phosphate from 4-amino-2-methyl-5-diphosphomethylpyrimidine and 4-methyl-5-(2-phosphoethyl)-thiazole: step 1/1. Its function is as follows. Condenses 4-methyl-5-(beta-hydroxyethyl)thiazole monophosphate (THZ-P) and 2-methyl-4-amino-5-hydroxymethyl pyrimidine pyrophosphate (HMP-PP) to form thiamine monophosphate (TMP). This is Thiamine-phosphate synthase from Bacillus anthracis (strain A0248).